A 412-amino-acid polypeptide reads, in one-letter code: Alpha-1-antitrypsin 1-3 (412 aa).

The N-terminal stretch at 1–24 is a signal peptide; sequence MTPSISWGLLLLAGLCCLVPSFLA. N-linked (GlcNAc...) asparagine glycosylation is found at Asn-64, Asn-101, and Asn-265. The segment at 368–387 is RCL; that stretch reads AVTVLLAVPYSMPPILRFDH.

This sequence belongs to the serpin family.

The protein resides in the secreted. In terms of biological role, inhibitor of serine proteases. Can inhibit trypsin and chymotrypsin; relatively ineffective against elastase. In Mus musculus (Mouse), this protein is Alpha-1-antitrypsin 1-3 (Serpina1c).